The chain runs to 400 residues: Phosphoglycerate kinase (400 aa).

Residues 24–26 (DFN), R39, 62–65 (HFGR), R121, and R154 each bind substrate. ATP-binding positions include K205, G296, E327, and 356–359 (GGDS).

This sequence belongs to the phosphoglycerate kinase family. As to quaternary structure, monomer.

It is found in the cytoplasm. The enzyme catalyses (2R)-3-phosphoglycerate + ATP = (2R)-3-phospho-glyceroyl phosphate + ADP. Its pathway is carbohydrate degradation; glycolysis; pyruvate from D-glyceraldehyde 3-phosphate: step 2/5. This is Phosphoglycerate kinase from Rippkaea orientalis (strain PCC 8801 / RF-1) (Cyanothece sp. (strain PCC 8801)).